Here is a 524-residue protein sequence, read N- to C-terminus: Probable lipid II flippase MurJ (524 aa).

Helical transmembrane passes span 44 to 64, 103 to 123, 146 to 166, 172 to 192, 195 to 215, 250 to 270, 284 to 304, 322 to 342, 367 to 387, 396 to 416, 420 to 440, 456 to 476, and 494 to 514; these read IFGA…PNLL, LLTL…PWVI, ITFP…ILNT, IPAF…LFAA, FNPP…LQLV, ILGV…ASFL, LMEF…LPSL, WGLR…GILA, LIAY…APGF, PVKI…AFIG, HAGL…LLYW, WFLM…FGVL, and LMAV…VLGF.

This sequence belongs to the MurJ/MviN family.

The protein localises to the cell inner membrane. The protein operates within cell wall biogenesis; peptidoglycan biosynthesis. Its function is as follows. Involved in peptidoglycan biosynthesis. Transports lipid-linked peptidoglycan precursors from the inner to the outer leaflet of the cytoplasmic membrane. This chain is Probable lipid II flippase MurJ, found in Salmonella typhimurium (strain LT2 / SGSC1412 / ATCC 700720).